A 159-amino-acid chain; its full sequence is Bacterioferritin (159 aa).

The region spanning 1 to 145 is the Ferritin-like diiron domain; that stretch reads MQGDPDVLRL…TQLALMGQLG (145 aa). Positions 18 and 51 each coordinate Fe cation. M52 lines the heme b pocket. The Fe cation site is built by H54, E94, E127, and H130.

The protein belongs to the bacterioferritin family. Homooligomer of 24 subunits, arranged as 12 dimers, that are packed together to form an approximately spherical molecule with a central cavity, in which large amounts of iron can be deposited. Requires heme b as cofactor.

It is found in the cytoplasm. It localises to the cytosol. The protein resides in the membrane. The catalysed reaction is 4 Fe(2+) + O2 + 4 H(+) = 4 Fe(3+) + 2 H2O. The enzyme catalyses Fe(2+)(in) = Fe(2+)(out). In terms of biological role, iron-storage protein, whose ferroxidase center binds Fe(2+), oxidizes it using dioxygen to Fe(3+), and participates in the subsequent Fe(3+) oxide mineral core formation within the central cavity of the BFR protein shell. Probably plays a crucial role in the intracellular existence of this organism by functioning as a temporary depository for iron in iron deprivation. The chain is Bacterioferritin (bfr) from Mycobacterium leprae (strain TN).